Consider the following 66-residue polypeptide: DNA gyrase inhibitor YacG (66 aa).

Zn(2+) is bound by residues cysteine 9, cysteine 12, cysteine 28, and cysteine 32. The interval 45–66 is disordered; sequence HKIAGSEESEDELYSGDLEPRH.

The protein belongs to the DNA gyrase inhibitor YacG family. As to quaternary structure, interacts with GyrB. Zn(2+) is required as a cofactor.

Inhibits all the catalytic activities of DNA gyrase by preventing its interaction with DNA. Acts by binding directly to the C-terminal domain of GyrB, which probably disrupts DNA binding by the gyrase. This Pseudomonas putida (strain ATCC 47054 / DSM 6125 / CFBP 8728 / NCIMB 11950 / KT2440) protein is DNA gyrase inhibitor YacG.